The primary structure comprises 98 residues: Co-chaperonin GroES (98 aa).

Belongs to the GroES chaperonin family. As to quaternary structure, heptamer of 7 subunits arranged in a ring. Interacts with the chaperonin GroEL.

The protein resides in the cytoplasm. Functionally, together with the chaperonin GroEL, plays an essential role in assisting protein folding. The GroEL-GroES system forms a nano-cage that allows encapsulation of the non-native substrate proteins and provides a physical environment optimized to promote and accelerate protein folding. GroES binds to the apical surface of the GroEL ring, thereby capping the opening of the GroEL channel. The chain is Co-chaperonin GroES from Clavibacter michiganensis subsp. michiganensis (strain NCPPB 382).